The chain runs to 514 residues: ATP synthase subunit alpha (514 aa).

170–177 (GDRQIGKT) provides a ligand contact to ATP.

It belongs to the ATPase alpha/beta chains family. F-type ATPases have 2 components, CF(1) - the catalytic core - and CF(0) - the membrane proton channel. CF(1) has five subunits: alpha(3), beta(3), gamma(1), delta(1), epsilon(1). CF(0) has three main subunits: a(1), b(2) and c(9-12). The alpha and beta chains form an alternating ring which encloses part of the gamma chain. CF(1) is attached to CF(0) by a central stalk formed by the gamma and epsilon chains, while a peripheral stalk is formed by the delta and b chains.

It localises to the cell inner membrane. The enzyme catalyses ATP + H2O + 4 H(+)(in) = ADP + phosphate + 5 H(+)(out). Functionally, produces ATP from ADP in the presence of a proton gradient across the membrane. The alpha chain is a regulatory subunit. The polypeptide is ATP synthase subunit alpha (Pseudomonas fluorescens (strain Pf0-1)).